Reading from the N-terminus, the 28-residue chain is Putative GDSL-motif lipase/hydrolase-like protein (28 aa).

Belongs to the 'GDSL' lipolytic enzyme family.

This chain is Putative GDSL-motif lipase/hydrolase-like protein, found in Populus euphratica (Euphrates poplar).